The chain runs to 375 residues: Phosphate acyltransferase (375 aa).

The segment at 354-375 (AQDDATSADADAPGDSETGSTN) is disordered. A compositionally biased stretch (low complexity) spans 356 to 368 (DDATSADADAPGD).

It belongs to the PlsX family. As to quaternary structure, homodimer. Probably interacts with PlsY.

The protein localises to the cytoplasm. The catalysed reaction is a fatty acyl-[ACP] + phosphate = an acyl phosphate + holo-[ACP]. It participates in lipid metabolism; phospholipid metabolism. In terms of biological role, catalyzes the reversible formation of acyl-phosphate (acyl-PO(4)) from acyl-[acyl-carrier-protein] (acyl-ACP). This enzyme utilizes acyl-ACP as fatty acyl donor, but not acyl-CoA. The protein is Phosphate acyltransferase of Ruegeria sp. (strain TM1040) (Silicibacter sp.).